The sequence spans 620 residues: Translocator protein BipB (620 aa).

The segment at 58 to 95 (QCDAQPAAHDARLDDKPALRAPQERDAPPLGASDTGSR) is disordered. Residues 66 to 84 (HDARLDDKPALRAPQERDA) are compositionally biased toward basic and acidic residues. Positions 309–339 (EMQAKREAELQKKSDEYQAQVKKAEEMQKTM) form a coiled coil. Transmembrane regions (helical) follow at residues 355-375 (FAAA…GLAL), 401-421 (AILK…LVAC), and 430-450 (LAGA…AAFV).

This sequence belongs to the SctE/SipB/YopB family.

The protein resides in the secreted. It localises to the host membrane. Functionally, plays a role in the bacterium-induced formation of multinucleated giant cell (MNGC), which is formed after host cell fusion, as well as in the intercellular spreading of bacteria and in the induction of apoptosis in macrophages. May act in concert with other effector proteins to induce fusion of host cell membranes. The protein is Translocator protein BipB (bipB) of Burkholderia pseudomallei (strain 1710b).